The chain runs to 354 residues: Glyceraldehyde-3-phosphate dehydrogenase (354 aa).

Residues T11–I12 and G108 each bind NAD(+). S137–N139 serves as a coordination point for D-glyceraldehyde 3-phosphate. C138 acts as the Nucleophile in catalysis. R166 is a binding site for NAD(+). H192–G193 is a D-glyceraldehyde 3-phosphate binding site. Position 299 (Q299) interacts with NAD(+).

The protein belongs to the glyceraldehyde-3-phosphate dehydrogenase family. In terms of assembly, homotetramer.

The protein resides in the cytoplasm. The enzyme catalyses D-glyceraldehyde 3-phosphate + phosphate + NADP(+) = (2R)-3-phospho-glyceroyl phosphate + NADPH + H(+). The catalysed reaction is D-glyceraldehyde 3-phosphate + phosphate + NAD(+) = (2R)-3-phospho-glyceroyl phosphate + NADH + H(+). Its pathway is carbohydrate degradation; glycolysis; pyruvate from D-glyceraldehyde 3-phosphate: step 1/5. This chain is Glyceraldehyde-3-phosphate dehydrogenase, found in Haloarcula marismortui (strain ATCC 43049 / DSM 3752 / JCM 8966 / VKM B-1809) (Halobacterium marismortui).